Reading from the N-terminus, the 187-residue chain is Elongation factor P (187 aa).

Belongs to the elongation factor P family.

Its subcellular location is the cytoplasm. It participates in protein biosynthesis; polypeptide chain elongation. In terms of biological role, involved in peptide bond synthesis. Stimulates efficient translation and peptide-bond synthesis on native or reconstituted 70S ribosomes in vitro. Probably functions indirectly by altering the affinity of the ribosome for aminoacyl-tRNA, thus increasing their reactivity as acceptors for peptidyl transferase. The sequence is that of Elongation factor P from Mycobacterium leprae (strain Br4923).